We begin with the raw amino-acid sequence, 202 residues long: Ribonuclease HII (202 aa).

Residues 13-202 (KIEAGLDEAG…HFKPKQLDLF (190 aa)) enclose the RNase H type-2 domain. A divalent metal cation-binding residues include Asp-19, Glu-20, and Asp-112.

It belongs to the RNase HII family. It depends on Mn(2+) as a cofactor. Mg(2+) is required as a cofactor.

It localises to the cytoplasm. The enzyme catalyses Endonucleolytic cleavage to 5'-phosphomonoester.. Its function is as follows. Endonuclease that specifically degrades the RNA of RNA-DNA hybrids. The polypeptide is Ribonuclease HII (Cytophaga hutchinsonii (strain ATCC 33406 / DSM 1761 / CIP 103989 / NBRC 15051 / NCIMB 9469 / D465)).